The following is a 136-amino-acid chain: Ribonuclease P protein component (136 aa).

The disordered stretch occupies residues 116–136; sequence RPQRAAAKGSAGTTQKGTPRA. Positions 126–136 are enriched in polar residues; the sequence is AGTTQKGTPRA.

Belongs to the RnpA family. Consists of a catalytic RNA component (M1 or rnpB) and a protein subunit.

It catalyses the reaction Endonucleolytic cleavage of RNA, removing 5'-extranucleotides from tRNA precursor.. RNaseP catalyzes the removal of the 5'-leader sequence from pre-tRNA to produce the mature 5'-terminus. It can also cleave other RNA substrates such as 4.5S RNA. The protein component plays an auxiliary but essential role in vivo by binding to the 5'-leader sequence and broadening the substrate specificity of the ribozyme. This is Ribonuclease P protein component from Pseudarthrobacter chlorophenolicus (strain ATCC 700700 / DSM 12829 / CIP 107037 / JCM 12360 / KCTC 9906 / NCIMB 13794 / A6) (Arthrobacter chlorophenolicus).